The sequence spans 371 residues: tRNA-specific 2-thiouridylase MnmA (371 aa).

ATP-binding positions include 13–20 (GMSGGVDS) and Met39. The segment at 99-101 (NPD) is interaction with target base in tRNA. The active-site Nucleophile is Cys104. An intrachain disulfide couples Cys104 to Cys200. Gly128 lines the ATP pocket. The segment at 150–152 (KDQ) is interaction with tRNA. Cys200 (cysteine persulfide intermediate) is an active-site residue. Residues 308–309 (RY) form an interaction with tRNA region.

The protein belongs to the MnmA/TRMU family.

The protein localises to the cytoplasm. The enzyme catalyses S-sulfanyl-L-cysteinyl-[protein] + uridine(34) in tRNA + AH2 + ATP = 2-thiouridine(34) in tRNA + L-cysteinyl-[protein] + A + AMP + diphosphate + H(+). Functionally, catalyzes the 2-thiolation of uridine at the wobble position (U34) of tRNA, leading to the formation of s(2)U34. This Bacillus thuringiensis (strain Al Hakam) protein is tRNA-specific 2-thiouridylase MnmA.